The chain runs to 257 residues: Thiazole synthase (257 aa).

The Schiff-base intermediate with DXP role is filled by K98. 1-deoxy-D-xylulose 5-phosphate is bound by residues G159, 185 to 186 (AG), and 207 to 208 (NT).

Belongs to the ThiG family. In terms of assembly, homotetramer. Forms heterodimers with either ThiH or ThiS.

Its subcellular location is the cytoplasm. It catalyses the reaction [ThiS sulfur-carrier protein]-C-terminal-Gly-aminoethanethioate + 2-iminoacetate + 1-deoxy-D-xylulose 5-phosphate = [ThiS sulfur-carrier protein]-C-terminal Gly-Gly + 2-[(2R,5Z)-2-carboxy-4-methylthiazol-5(2H)-ylidene]ethyl phosphate + 2 H2O + H(+). It functions in the pathway cofactor biosynthesis; thiamine diphosphate biosynthesis. Its function is as follows. Catalyzes the rearrangement of 1-deoxy-D-xylulose 5-phosphate (DXP) to produce the thiazole phosphate moiety of thiamine. Sulfur is provided by the thiocarboxylate moiety of the carrier protein ThiS. In vitro, sulfur can be provided by H(2)S. This chain is Thiazole synthase, found in Anaeromyxobacter dehalogenans (strain 2CP-C).